A 415-amino-acid polypeptide reads, in one-letter code: Zona pellucida-like domain-containing protein 1 (415 aa).

Residues 1–19 (MEPIWLLLLLAIFTVSVSA) form the signal peptide. The Extracellular portion of the chain corresponds to 20-372 (QFNGYNCDAN…QQFQINSVTS (353 aa)). Residues 43–320 (YCGVQTITMK…PTCHNRDRRD (278 aa)) enclose the ZP domain. 4 disulfide bridges follow: cysteine 44-cysteine 155, cysteine 79-cysteine 104, cysteine 235-cysteine 296, and cysteine 255-cysteine 313. A helical membrane pass occupies residues 373-393 (ALISGVVILGATSLSFFIIAL). The Cytoplasmic segment spans residues 394-415 (TLLNRKKQNSLVLCGIRNPVFN).

In terms of processing, proteolytically cleaved before the transmembrane segment to yield the secreted form found in the extracellular matrix of the cupula.

Its subcellular location is the cytoplasmic vesicle membrane. The protein resides in the secreted. It is found in the extracellular space. The protein localises to the extracellular matrix. In terms of biological role, glycoprotein which is a component of the gelatinous extracellular matrix in the cupulae of the vestibular organ. This is Zona pellucida-like domain-containing protein 1 (zpld1) from Xenopus laevis (African clawed frog).